Reading from the N-terminus, the 288-residue chain is Ribosomal RNA small subunit methyltransferase A (288 aa).

S-adenosyl-L-methionine contacts are provided by asparagine 18, leucine 20, glycine 45, glutamate 66, aspartate 91, and asparagine 118.

The protein belongs to the class I-like SAM-binding methyltransferase superfamily. rRNA adenine N(6)-methyltransferase family. RsmA subfamily.

Its subcellular location is the cytoplasm. It carries out the reaction adenosine(1518)/adenosine(1519) in 16S rRNA + 4 S-adenosyl-L-methionine = N(6)-dimethyladenosine(1518)/N(6)-dimethyladenosine(1519) in 16S rRNA + 4 S-adenosyl-L-homocysteine + 4 H(+). Its function is as follows. Specifically dimethylates two adjacent adenosines (A1518 and A1519) in the loop of a conserved hairpin near the 3'-end of 16S rRNA in the 30S particle. May play a critical role in biogenesis of 30S subunits. In Pasteurella multocida (strain Pm70), this protein is Ribosomal RNA small subunit methyltransferase A.